Reading from the N-terminus, the 324-residue chain is Cyclin-dependent kinase C-3 (324 aa).

In terms of domain architecture, Protein kinase spans 27-320 (FRRIRKIGEG…AHDALCAAYF (294 aa)). ATP is bound by residues 33–41 (IGEGTYGEV) and Lys56. Thr37 is modified (phosphothreonine). At Tyr38 the chain carries Phosphotyrosine. Asp160 acts as the Proton acceptor in catalysis. Thr193 is subject to Phosphothreonine.

Belongs to the protein kinase superfamily. CMGC Ser/Thr protein kinase family. CDC2/CDKX subfamily.

The catalysed reaction is L-seryl-[protein] + ATP = O-phospho-L-seryl-[protein] + ADP + H(+). The enzyme catalyses L-threonyl-[protein] + ATP = O-phospho-L-threonyl-[protein] + ADP + H(+). It carries out the reaction [DNA-directed RNA polymerase] + ATP = phospho-[DNA-directed RNA polymerase] + ADP + H(+). The chain is Cyclin-dependent kinase C-3 (CDKC-1) from Oryza sativa subsp. japonica (Rice).